A 42-amino-acid polypeptide reads, in one-letter code: Photosystem I reaction center subunit IX (42 aa).

Residues 7–27 (YLSIAPVLATLWFGFLVGSLI) form a helical membrane-spanning segment.

The protein belongs to the PsaJ family.

It localises to the plastid membrane. Functionally, may help in the organization of the PsaE and PsaF subunits. This is Photosystem I reaction center subunit IX from Aneura mirabilis (Parasitic liverwort).